The following is an 84-amino-acid chain: Dolichol phosphate-mannose biosynthesis regulatory protein (84 aa).

Transmembrane regions (helical) follow at residues 11–31 (FGLV…VILL) and 49–69 (YAVL…GLFI).

This sequence belongs to the DPM2 family. Component of the dolichol-phosphate mannose (DPM) synthase complex composed of DPM1, DPM2 and DPM3; in the complex interacts directly with DPM3. Component of the glycosylphosphatidylinositol-N-acetylglucosaminyltransferase (GPI-GnT) complex composed at least by PIGA, PIGC, PIGH, PIGP, PIGQ, PIGY and DPM2. Interacts with PIGA, PIGC and PIGQ.

The protein localises to the endoplasmic reticulum membrane. It participates in protein modification; protein glycosylation. Functionally, regulates the biosynthesis of dolichol phosphate-mannose. Regulatory subunit of the dolichol-phosphate mannose (DPM) synthase complex; essential for the ER localization and stable expression of DPM1. Part of the glycosylphosphatidylinositol-N-acetylglucosaminyltransferase (GPI-GnT) complex that catalyzes the transfer of N-acetylglucosamine from UDP-N-acetylglucosamine to phosphatidylinositol and participates in the first step of GPI biosynthesis. May act by regulating the GPI-GNT complex. This chain is Dolichol phosphate-mannose biosynthesis regulatory protein, found in Cricetulus griseus (Chinese hamster).